Reading from the N-terminus, the 407-residue chain is Spore germination protein KC (407 aa).

The signal sequence occupies residues 1-20; it reads MVRKCLLAVLMLLSVIVLPG. Cys-21 is lipidated: N-palmitoyl cysteine. Cys-21 is lipidated: S-diacylglycerol cysteine.

Belongs to the GerABKC lipoprotein family.

The protein resides in the cell membrane. In terms of biological role, involved in the germination response to the combination of glucose, fructose, L-asparagine, and KCl. This Bacillus subtilis (strain 168) protein is Spore germination protein KC (gerKC).